A 304-amino-acid chain; its full sequence is Small ribosomal subunit biogenesis GTPase RsgA (304 aa).

One can recognise a CP-type G domain in the interval 78–237 (HSFLTRPPVA…VADTPGFNRP (160 aa)). GTP is bound by residues 127 to 130 (TKTD) and 179 to 187 (GPSGVGKSS). Cys262, Cys267, His269, and Cys275 together coordinate Zn(2+).

It belongs to the TRAFAC class YlqF/YawG GTPase family. RsgA subfamily. Monomer. Associates with 30S ribosomal subunit, binds 16S rRNA. Zn(2+) serves as cofactor.

Its subcellular location is the cytoplasm. One of several proteins that assist in the late maturation steps of the functional core of the 30S ribosomal subunit. Helps release RbfA from mature subunits. May play a role in the assembly of ribosomal proteins into the subunit. Circularly permuted GTPase that catalyzes slow GTP hydrolysis, GTPase activity is stimulated by the 30S ribosomal subunit. This is Small ribosomal subunit biogenesis GTPase RsgA from Synechococcus sp. (strain CC9605).